The chain runs to 146 residues: Hemoglobin subunit beta (146 aa).

Valine 1 is modified (N-acetylvaline). Residues 2-146 (HLSGEEKACV…VANALAHKYH (145 aa)) enclose the Globin domain. Threonine 12 bears the Phosphothreonine mark. The residue at position 44 (serine 44) is a Phosphoserine. Lysine 59 carries the N6-acetyllysine modification. A heme b-binding site is contributed by histidine 63. N6-acetyllysine is present on lysine 82. A heme b-binding site is contributed by histidine 92. The residue at position 93 (cysteine 93) is an S-nitrosocysteine. At lysine 144 the chain carries N6-acetyllysine.

It belongs to the globin family. As to quaternary structure, heterotetramer of two alpha chains and two beta chains. As to expression, red blood cells.

Functionally, involved in oxygen transport from the lung to the various peripheral tissues. In Suncus murinus (Asian house shrew), this protein is Hemoglobin subunit beta (HBB).